We begin with the raw amino-acid sequence, 867 residues long: Probable potassium transporter 15 (867 aa).

Residues 1–13 (MAASSSSSASASA) are compositionally biased toward low complexity. A disordered region spans residues 1-88 (MAASSSSSAS…EGEGEDGEKQ (88 aa)). Topologically, residues 1–124 (MAASSSSSAS…DSEEFDFGRT (124 aa)) are cytoplasmic. Positions 32 to 44 (TEEDDEGEEDGDT) are enriched in acidic residues. Positions 45-54 (VEAAAAAVGA) are enriched in low complexity. Residues 63 to 84 (SEEEEDEEDGGGGGEGEGEGED) show a composition bias toward acidic residues. Residues 125–145 (MFLALQTLAVVFGDIGISPLY) form a helical membrane-spanning segment. At 146–167 (TFDVMFSKYPILGEEDVLGALS) the chain is on the extracellular side. Residues 168 to 188 (LVLYTLISMPLVKYVLVVLWA) form a helical membrane-spanning segment. Over 189 to 252 (NDDGEGGIFA…KLESSLLLKK (64 aa)) the chain is Cytoplasmic. The helical transmembrane segment at 253 to 273 (LLLGLVLFGTAMFISNGVITP) threads the bilayer. Over 274–285 (AMSVLSAVSGLK) the chain is Extracellular. Residues 286 to 306 (VGIPNASQGLVVMISVVLLVI) form a helical membrane-spanning segment. Over 307–317 (LYSVQRYATSK) the chain is Cytoplasmic. Residues 318–338 (MGFALGPSLLIWFCCLGGIGI) traverse the membrane as a helical segment. Topologically, residues 339–365 (YNLSTYGPAAFKAFNPLYIIYYFGRNP) are extracellular. Asparagine 340 carries N-linked (GlcNAc...) asparagine glycosylation. The chain crosses the membrane as a helical span at residues 366 to 386 (FQAWLSLAGCLLCATGSEAIF). Over 387–400 (ANLSYFPVRYVQSM) the chain is Cytoplasmic. The helical transmembrane segment at 401–421 (FALLVLPCLVLAYLGQGAFLI) threads the bilayer. The Extracellular portion of the chain corresponds to 422 to 433 (ANQNSSEQIFFS). Asparagine 425 carries N-linked (GlcNAc...) asparagine glycosylation. A helical membrane pass occupies residues 434–454 (SIPSGVFWPVFLIANLAALIA). Residues 455–490 (SRTMTTAIFQCLKQSIALGCFPRLKIIHTSRKFMAK) lie on the Cytoplasmic side of the membrane. The helical transmembrane segment at 491-511 (IYIPVVNWFLLFSCLGFILLF) threads the bilayer. Residues 512 to 522 (RSIYDVGNAYA) are Extracellular-facing. Residues 523 to 543 (IAELGVMIMATVYVTIIMLLI) form a helical membrane-spanning segment. Residues 544 to 545 (WE) are Cytoplasmic-facing. A helical transmembrane segment spans residues 546–566 (TSIVKVLSFVITFLSLELVFF). Over 567-572 (SSSLSS) the chain is Extracellular. Residues 573-593 (VGDGGWALIIFASGILMVMFI) form a helical membrane-spanning segment. The Cytoplasmic segment spans residues 594 to 867 (WNYGSKLKYD…VMQVRLTSYV (274 aa)).

Belongs to the HAK/KUP transporter (TC 2.A.72.3) family.

It localises to the membrane. Functionally, high-affinity potassium transporter. The protein is Probable potassium transporter 15 (HAK15) of Oryza sativa subsp. japonica (Rice).